The primary structure comprises 187 residues: tRNA (mnm(5)s(2)U34)-methyltransferase (187 aa).

Residues Asn31, Asn33, Asp51, Gln53, His77, and Glu78 each coordinate S-adenosyl-L-methionine.

Belongs to the methyltransferase superfamily. MnmM family. As to quaternary structure, homodimer.

It catalyses the reaction 5-aminomethyl-2-thiouridine(34) in tRNA + S-adenosyl-L-methionine = 5-methylaminomethyl-2-thiouridine(34) in tRNA + S-adenosyl-L-homocysteine + H(+). The protein operates within tRNA modification. Its function is as follows. Involved in the biosynthesis of 5-methylaminomethyl-2-thiouridine (mnm(5)s(2)U) at the wobble position (U34) in tRNA. Catalyzes the transfer of a methyl group from S-adenosyl-L-methionine to nm(5)s(2)U34 to form mnm(5)s(2)U34. The polypeptide is tRNA (mnm(5)s(2)U34)-methyltransferase (Staphylococcus aureus (strain NCTC 8325 / PS 47)).